The primary structure comprises 700 residues: MSTKNLLLELFVEELPPKALKKIGEAFAQTLQASLQTQGLLSADSVLTAFASPRRLGVHLTKVLEQADDKTVMQKLMPAAVGIGADGKATPALLKKLAALGADESAVAGLKRESDGKAEVLFFNSVVTGVMLTDGLQKALEETLGKLPIPKVMAYQLADGWETVNFVRPAHGLVALYGADVLNISVLGLHAGNTTHGHRFEAGIDPVYIRDADSYAKQIATEGAVIASFAERRAEIVRQLASAAAEAGSNLTPIEDEALLDEVTGLVERPNVLIGQFEEAFLEVPQECLILTMKANQKYFPLLDSKGGLSNKFLIVSNIRPADASTVIGGNERVVRPRLADAKFFFDQDRKKTLMSRVAGLDKVVYHNKLGTQGERIARVRAIAQAIAGKLGVDAQQADTAAQLAKADLLTDMVGEFPELQGIMGRYYALHDGLPAAVADAIEDHYKPRFAGDELPRNPVGMVVALADKLETLVGLFSIGQVPTGDKDPFALRRHALGIIRMLIEGKLDIGINDLITAAEKPFNGLSAEHRSALLNFIFDRLANALREQGYSAQEIDAVLALQPQRLADVAERLAAVRAFAALPEAASLAAANKRVGNILKKVEGTVAAQVDTALLKEPAEIALNQTLTTVKPQAEAAFARGDYTASLQALAALRNPVDAFFDGVMVNAEDIALRNNRQGLLATLHQAMNQVADISKLAA.

This sequence belongs to the class-II aminoacyl-tRNA synthetase family. As to quaternary structure, tetramer of two alpha and two beta subunits.

Its subcellular location is the cytoplasm. It carries out the reaction tRNA(Gly) + glycine + ATP = glycyl-tRNA(Gly) + AMP + diphosphate. The chain is Glycine--tRNA ligase beta subunit from Janthinobacterium sp. (strain Marseille) (Minibacterium massiliensis).